Reading from the N-terminus, the 345-residue chain is S-adenosylmethionine:tRNA ribosyltransferase-isomerase (345 aa).

This sequence belongs to the QueA family. As to quaternary structure, monomer.

The protein localises to the cytoplasm. The enzyme catalyses 7-aminomethyl-7-carbaguanosine(34) in tRNA + S-adenosyl-L-methionine = epoxyqueuosine(34) in tRNA + adenine + L-methionine + 2 H(+). It functions in the pathway tRNA modification; tRNA-queuosine biosynthesis. Transfers and isomerizes the ribose moiety from AdoMet to the 7-aminomethyl group of 7-deazaguanine (preQ1-tRNA) to give epoxyqueuosine (oQ-tRNA). In Shewanella amazonensis (strain ATCC BAA-1098 / SB2B), this protein is S-adenosylmethionine:tRNA ribosyltransferase-isomerase.